Reading from the N-terminus, the 514-residue chain is Synaptic vesicular amine transporter (514 aa).

Residues 1-20 (MALSELALVRWLQESRRSRK) lie on the Cytoplasmic side of the membrane. Residues 21 to 41 (LILFIVFLALLLDNMLLTVVV) traverse the membrane as a helical segment. Over 42-129 (PIIPSYLYSI…EDKDLLNENV (88 aa)) the chain is Lumenal, vesicle. 2 N-linked (GlcNAc...) asparagine glycosylation sites follow: N84 and N91. C117 and C324 are oxidised to a cystine. Residues 130-150 (QVGLLFASKATVQLITNPFIG) traverse the membrane as a helical segment. Residues 151–159 (LLTNRIGYP) are Cytoplasmic-facing. Residues 160-180 (IPIFAGFCIMFVSTIMFAFSS) form a helical membrane-spanning segment. The Lumenal, vesicle portion of the chain corresponds to 181 to 189 (SYAFLLIAR). Residues 190 to 210 (SLQGIGSSCSSVAGMGMLASV) traverse the membrane as a helical segment. The Cytoplasmic portion of the chain corresponds to 211 to 219 (YTDDEERGN). Residues 220 to 242 (VMGIALGGLAMGVLVGPPFGSVL) form a helical membrane-spanning segment. Serotonin-binding residues include L228 and V232. The Lumenal, vesicle segment spans residues 243–248 (YEFVGK). The helical transmembrane segment at 249 to 271 (TAPFLVLAALVLLDGAIQLFVLQ) threads the bilayer. Over 272–291 (PSRVQPESQKGTPLTTLLKD) the chain is Cytoplasmic. A helical transmembrane segment spans residues 292-311 (PYILIAAGSICFANMGIAML). Positions 305, 308, 312, 334, and 341 each coordinate serotonin. Residues 312–328 (EPALPIWMMETMCSRKW) are Lumenal, vesicle-facing. A helical membrane pass occupies residues 329-352 (QLGVAFLPASISYLIGTNIFGILA). At 353–357 (HKMGR) the chain is on the cytoplasmic side. A helical membrane pass occupies residues 358–378 (WLCALLGMIIVGVSILCIPFA). At 379 to 389 (KNIYGLIAPNF) the chain is on the lumenal, vesicle side. The chain crosses the membrane as a helical span at residues 390–410 (GVGFAIGMVDSSMMPIMGYLV). Serotonin is bound at residue D399. At 411-414 (DLRH) the chain is on the cytoplasmic side. Residues 415-435 (VSVYGSVYAIADVAFCMGYAI) form a helical membrane-spanning segment. Residue Y433 coordinates serotonin. Topologically, residues 436 to 440 (GPSAG) are lumenal, vesicle. The chain crosses the membrane as a helical span at residues 441-462 (GAIAKAIGFPWLMTIIGIIDIL). Residues 463 to 514 (FAPLCFFLRSPPAKEEKMAILMDHNCPIKTKMYTQNNIQSYPIGEDEESESD) lie on the Cytoplasmic side of the membrane. Phosphoserine is present on residues S511 and S513.

It belongs to the major facilitator superfamily. Vesicular transporter family. In terms of assembly, interacts with SLC6A3. In terms of tissue distribution, expressed in neuronal and neuroendocrine tissues. Detected in central and peripheral nervous system in particular in axonal and dendritic processes in dopaminergic cells of substantia nigra, histaminergic neuronal cell bodies of substantia nigra and tuberomammillary nucleus, in ganglion cells of sympathetic glia and in peripheral sympathetic nerve terminals in stomach and duodenum (at protein level). Highly expressed in chromaffin cells of the adrenal medulla and histamine-storing enterochromaffin-like cells of oxyntic mucosa (at protein level).

The protein localises to the cytoplasmic vesicle. It localises to the secretory vesicle. It is found in the synaptic vesicle membrane. The protein resides in the secretory vesicle membrane. Its subcellular location is the cell projection. The protein localises to the axon. It localises to the dendrite. The enzyme catalyses serotonin(in) + 2 H(+)(out) = serotonin(out) + 2 H(+)(in). It catalyses the reaction dopamine(in) + 2 H(+)(out) = dopamine(out) + 2 H(+)(in). The catalysed reaction is histamine(in) + 2 H(+)(out) = histamine(out) + 2 H(+)(in). Its activity is regulated as follows. Strongly inhibited by reserpine and tetrabenazine. Also inhibited to a lesser extent by ketanserin and fenfluramine. Reserpine and ketanserin inhibit by blocking the substrate-binding pocket. Tetrabenazine traps SLC18A2/VMAT2 in an occluded conformation and its inhibition is specific to SLC18A2/VMAT2 but not SLC18A1/VMAT1. Electrogenic antiporter that exchanges one cationic monoamine with two intravesicular protons across the membrane of secretory and synaptic vesicles. Uses the electrochemical proton gradient established by the V-type proton-pump ATPase to accumulate high concentrations of monoamines inside the vesicles prior to their release via exocytosis. Transports a variety of catecholamines such as dopamine, adrenaline and noradrenaline, histamine, and indolamines such as serotonin. Regulates the transvesicular monoaminergic gradient that determines the quantal size. Mediates somatodendritic dopamine release in hippocampal neurons, likely as part of a regulated secretory pathway that integrates retrograde synaptic signals. Acts as a primary transporter for striatal dopamine loading ensuring impulse-dependent release of dopamine at the synaptic cleft. Responsible for histamine and serotonin storage and subsequent corelease from mast cell granules. In Homo sapiens (Human), this protein is Synaptic vesicular amine transporter (SLC18A2).